The chain runs to 323 residues: Protein MEI2-like 6 (323 aa).

The protein is Protein MEI2-like 6 (ML6) of Oryza sativa subsp. japonica (Rice).